Reading from the N-terminus, the 52-residue chain is UPF0391 membrane protein Tgr7_2500 (52 aa).

2 consecutive transmembrane segments (helical) span residues 4–24 (WALI…SGVA) and 29–49 (WIAQ…LLGG).

This sequence belongs to the UPF0391 family.

The protein resides in the cell membrane. In Thioalkalivibrio sulfidiphilus (strain HL-EbGR7), this protein is UPF0391 membrane protein Tgr7_2500.